A 449-amino-acid chain; its full sequence is Trigger factor (449 aa).

Positions 174 to 261 (GDIAVVGFKG…LKDLKTRELP (88 aa)) constitute a PPIase FKBP-type domain. Residues 430–449 (ENSTVTEKAPDKDKPSVTDA) form a disordered region. Basic and acidic residues predominate over residues 437 to 449 (KAPDKDKPSVTDA).

It belongs to the FKBP-type PPIase family. Tig subfamily.

Its subcellular location is the cytoplasm. It catalyses the reaction [protein]-peptidylproline (omega=180) = [protein]-peptidylproline (omega=0). Functionally, involved in protein export. Acts as a chaperone by maintaining the newly synthesized protein in an open conformation. Functions as a peptidyl-prolyl cis-trans isomerase. This Synechococcus sp. (strain CC9311) protein is Trigger factor.